Here is a 203-residue protein sequence, read N- to C-terminus: Putative 3-methyladenine DNA glycosylase (203 aa).

The protein belongs to the DNA glycosylase MPG family.

This Staphylococcus saprophyticus subsp. saprophyticus (strain ATCC 15305 / DSM 20229 / NCIMB 8711 / NCTC 7292 / S-41) protein is Putative 3-methyladenine DNA glycosylase.